Reading from the N-terminus, the 565-residue chain is Wee1-like protein kinase 2 (565 aa).

Composition is skewed to basic and acidic residues over residues 1–12 and 26–52; these read MGDNGDNKELKQ and EGQK…DSEA. Disordered stretches follow at residues 1–142 and 169–189; these read MGDN…TPGP and KSNG…EEGK. S77 is subject to Phosphoserine. The Nuclear localization signal signature appears at 173–175; sequence KRK. Residues 178–189 show a composition bias toward basic and acidic residues; the sequence is RDLEEAGPEEGK. Residues 214–492 enclose the Protein kinase domain; that stretch reads FLEVEKIGVG…TRSRVLCPSL (279 aa). ATP is bound by residues 220 to 228 and K243; that span reads IGVGEFGTV. A Nuclear export signal motif is present at residues 317-331; the sequence is KLKDILLQISLGLKY. The Proton acceptor role is filled by D341. N346 and D382 together coordinate Mg(2+). Residues 495 to 521 are a coiled coil; that stretch reads TEELQQQLNLEKFKTATLERELKEVQR. Positions 518 to 565 are disordered; it reads EVQRAQSSKEGQSSPGVTGTHTGSRSTRRLVGGKSAKSSSFTWGQSSP. Polar residues-rich tracts occupy residues 521-534 and 553-565; these read RAQS…SPGV and AKSS…QSSP.

It belongs to the protein kinase superfamily. Ser/Thr protein kinase family. WEE1 subfamily. Phosphorylation leads to increase its activity. As to expression, ovary-specific.

Its subcellular location is the nucleus. The catalysed reaction is L-tyrosyl-[protein] + ATP = O-phospho-L-tyrosyl-[protein] + ADP + H(+). Functionally, oocyte-specific protein tyrosine kinase that phosphorylates and inhibits CDK1 and acts as a key regulator of meiosis during both prophase I and metaphase II. Required to maintain meiotic arrest in oocytes during the germinal vesicle (GV) stage, a long period of quiescence at dictyate prophase I, by phosphorylating CDK1 at 'Tyr-15', leading to inhibit CDK1 activity and prevent meiotic reentry. Also required for metaphase II exit during egg activation by phosphorylating CDK1 at 'Tyr-15', to ensure exit from meiosis in oocytes and promote pronuclear formation. This chain is Wee1-like protein kinase 2 (WEE2), found in Sus scrofa (Pig).